Here is a 188-residue protein sequence, read N- to C-terminus: Probable thiol:disulfide interchange protein DsbE-2 (188 aa).

The Cytoplasmic portion of the chain corresponds to 1 to 11 (MSMLHQQKRKN). A helical transmembrane segment spans residues 12–32 (HFVFLPLVILLAVCALLFIGL). Residues 33–188 (QQDPQKIASA…KLEAENAKVR (156 aa)) lie on the Periplasmic side of the membrane. Positions 42-179 (ALIGKPVPTF…QEMFIPEWQK (138 aa)) constitute a Thioredoxin domain. A disulfide bridge connects residues cysteine 82 and cysteine 85.

The protein belongs to the thioredoxin family. DsbE subfamily.

It is found in the cell inner membrane. Its function is as follows. Could be involved in disulfide bond formation. Could catalyzes a late, reductive step in the assembly of periplasmic NrfA c-type cytochrome, probably the reduction of disulfide bonds of the apocytochrome c to allow covalent linkage with the heme. Possible subunit of a heme lyase. The sequence is that of Probable thiol:disulfide interchange protein DsbE-2 (nrfX) from Pasteurella multocida (strain Pm70).